A 357-amino-acid polypeptide reads, in one-letter code: Cobalt-precorrin-5B C(1)-methyltransferase (357 aa).

Belongs to the CbiD family.

The enzyme catalyses Co-precorrin-5B + S-adenosyl-L-methionine = Co-precorrin-6A + S-adenosyl-L-homocysteine. The protein operates within cofactor biosynthesis; adenosylcobalamin biosynthesis; cob(II)yrinate a,c-diamide from sirohydrochlorin (anaerobic route): step 6/10. Functionally, catalyzes the methylation of C-1 in cobalt-precorrin-5B to form cobalt-precorrin-6A. The chain is Cobalt-precorrin-5B C(1)-methyltransferase from Rhodospirillum rubrum (strain ATCC 11170 / ATH 1.1.1 / DSM 467 / LMG 4362 / NCIMB 8255 / S1).